Reading from the N-terminus, the 424-residue chain is GTPase HflX (424 aa).

Residues 194-364 (YTVALTGYTG…AVVEMLPEKV (171 aa)) enclose the Hflx-type G domain. Residues 200 to 207 (GYTGAGKT), 225 to 229 (FATLS), 246 to 249 (DTIG), 314 to 317 (NKID), and 342 to 344 (SAA) each bind GTP. Residues Thr-207 and Thr-227 each coordinate Mg(2+).

Belongs to the TRAFAC class OBG-HflX-like GTPase superfamily. HflX GTPase family. In terms of assembly, monomer. Associates with the 50S ribosomal subunit. Requires Mg(2+) as cofactor.

It is found in the cytoplasm. Functionally, GTPase that associates with the 50S ribosomal subunit and may have a role during protein synthesis or ribosome biogenesis. The sequence is that of GTPase HflX from Thermofilum pendens (strain DSM 2475 / Hrk 5).